Here is a 277-residue protein sequence, read N- to C-terminus: Large ribosomal subunit protein uL2 (277 aa).

Residues 222-277 (GVAMNPVDHPHGGGEGRTSGGRHPVSPWGKPTKGKRTRSNKATDKFIMRSRHQRKK) are disordered.

The protein belongs to the universal ribosomal protein uL2 family. As to quaternary structure, part of the 50S ribosomal subunit. Forms a bridge to the 30S subunit in the 70S ribosome.

Functionally, one of the primary rRNA binding proteins. Required for association of the 30S and 50S subunits to form the 70S ribosome, for tRNA binding and peptide bond formation. It has been suggested to have peptidyltransferase activity; this is somewhat controversial. Makes several contacts with the 16S rRNA in the 70S ribosome. The sequence is that of Large ribosomal subunit protein uL2 from Bartonella bacilliformis (strain ATCC 35685 / KC583 / Herrer 020/F12,63).